A 2139-amino-acid chain; its full sequence is U5 small nuclear ribonucleoprotein 200 kDa helicase (2139 aa).

Phosphoserine is present on residues Ser-17 and Ser-26. The disordered stretch occupies residues Glu-39–Asp-80. Lys-46 participates in a covalent cross-link: Glycyl lysine isopeptide (Lys-Gly) (interchain with G-Cter in SUMO2). Residues Glu-48–Asp-80 show a composition bias toward basic and acidic residues. The stretch at Asp-54 to Met-84 forms a coiled coil. Residue Ser-225 is modified to Phosphoserine. Position 389 is a phosphothreonine (Thr-389). The tract at residues Asp-395 to Ala-2132 is interaction with C9orf78 and WBP4. The 184-residue stretch at Arg-490–Leu-673 folds into the Helicase ATP-binding 1 domain. Ala-503–Thr-510 contributes to the ATP binding site. The short motif at Asp-615 to His-618 is the DEAH box element. Residues Pro-684–Gly-921 form the Helicase C-terminal 1 domain. Tyr-709 is subject to Phosphotyrosine. A Glycyl lysine isopeptide (Lys-Gly) (interchain with G-Cter in SUMO) cross-link involves residue Lys-944. The residue at position 971 (Lys-971) is an N6-acetyllysine; alternate. A Glycyl lysine isopeptide (Lys-Gly) (interchain with G-Cter in SUMO); alternate cross-link involves residue Lys-971. The SEC63 1 domain occupies Thr-982 to Phe-1289. Glycyl lysine isopeptide (Lys-Gly) (interchain with G-Cter in SUMO) cross-links involve residues Lys-1071 and Lys-1199. The tract at residues Leu-1285 to Asp-2139 is interaction with TSSC4. The 176-residue stretch at Asn-1340–Phe-1515 folds into the Helicase ATP-binding 2 domain. Ala-1353–Thr-1360 is a binding site for ATP. Thr-1431 is modified (phosphothreonine). The DEAH box motif lies at Asp-1457–His-1460. A Helicase C-terminal 2 domain is found at Pro-1548–Asp-1756. Thr-1768 is modified (phosphothreonine). Residues Pro-1815 to Val-2127 enclose the SEC63 2 domain. Ser-2005 is subject to Phosphoserine. Residue Lys-2094 forms a Glycyl lysine isopeptide (Lys-Gly) (interchain with G-Cter in SUMO) linkage. Residue Thr-2134 is modified to Phosphothreonine. 2 positions are modified to phosphoserine: Ser-2136 and Ser-2138.

It belongs to the helicase family. SKI2 subfamily. In terms of assembly, component of a core complex containing at least PRPF8, SNRNP200, EFTUD2 and SNRNP40. Component of the U5 snRNP and U4/U6-U5 tri-snRNP complexes, building blocks of the spliceosome. Component of the U4/U6-U5 tri-snRNP complex composed of the U4, U6 and U5 snRNAs and at least PRPF3, PRPF4, PRPF6, PRPF8, PRPF31, SNRNP200, TXNL4A, SNRNP40, DDX23, CD2BP2, PPIH, SNU13, EFTUD2, SART1 and USP39. Component of precatalytic, catalytic and postcatalytic spliceosomal complexes. Component of the minor spliceosome, which splices U12-type introns. Interacts with C9orf78; the interaction is direct and mutually exclusive with its interaction with WBP4. Interacts with WBP4; the interaction is mutually exclusive with its interaction with C9orf78. Interacts with PRPF8. Interacts with TSSC4; the interaction is direct, excludes recruitment of C9ORF78 and WBP4 to SNRNP200 and negatively regulates its RNA helicase activity.

It is found in the nucleus. The catalysed reaction is ATP + H2O = ADP + phosphate + H(+). Functionally, catalyzes the ATP-dependent unwinding of U4/U6 RNA duplices, an essential step in the assembly of a catalytically active spliceosome. Plays a role in pre-mRNA splicing as core component of precatalytic, catalytic and postcatalytic spliceosomal complexes. As a component of the minor spliceosome, involved in the splicing of U12-type introns in pre-mRNAs. Involved in spliceosome assembly, activation and disassembly. Mediates changes in the dynamic network of RNA-RNA interactions in the spliceosome. The polypeptide is U5 small nuclear ribonucleoprotein 200 kDa helicase (Snrnp200) (Rattus norvegicus (Rat)).